The chain runs to 186 residues: Ribosome-recycling factor (186 aa).

Belongs to the RRF family.

The protein resides in the cytoplasm. Its function is as follows. Responsible for the release of ribosomes from messenger RNA at the termination of protein biosynthesis. May increase the efficiency of translation by recycling ribosomes from one round of translation to another. In Phocaeicola vulgatus (strain ATCC 8482 / DSM 1447 / JCM 5826 / CCUG 4940 / NBRC 14291 / NCTC 11154) (Bacteroides vulgatus), this protein is Ribosome-recycling factor.